The sequence spans 565 residues: Amino-acid acetyltransferase, mitochondrial (565 aa).

The disordered stretch occupies residues 38 to 58 (DIATATPAATPSDGAQPPAQN). The N-acetyltransferase domain maps to 352-540 (LPVRVLRSME…EFGGGRLVRV (189 aa)).

Belongs to the acetyltransferase family.

It is found in the mitochondrion. It carries out the reaction L-glutamate + acetyl-CoA = N-acetyl-L-glutamate + CoA + H(+). The protein operates within amino-acid biosynthesis; L-arginine biosynthesis; N(2)-acetyl-L-ornithine from L-glutamate: step 1/4. Its function is as follows. N-acetylglutamate synthase involved in arginine biosynthesis. In Cryptococcus neoformans var. neoformans serotype D (strain B-3501A) (Filobasidiella neoformans), this protein is Amino-acid acetyltransferase, mitochondrial (ARG2).